A 161-amino-acid chain; its full sequence is Eukaryotic translation initiation factor 5A-1 (161 aa).

The residue at position 54 (Lys54) is a Hypusine.

Belongs to the eIF-5A family. Post-translationally, lys-54 undergoes hypusination, a unique post-translational modification that consists in the addition of a butylamino group from spermidine to lysine side chain, leading to the formation of the unusual amino acid hypusine. eIF-5As are the only known proteins to undergo this modification, which is essential for their function. As to expression, expressed specifically in the germline in the distal region of gonads where germ cells actively proliferate.

Its subcellular location is the cytoplasm. In terms of biological role, translation factor that promotes translation elongation and termination, particularly upon ribosome stalling at specific amino acid sequence contexts. Binds between the exit (E) and peptidyl (P) site of the ribosome and promotes rescue of stalled ribosome: specifically required for efficient translation of polyproline-containing peptides as well as other motifs that stall the ribosome. Acts as a ribosome quality control (RQC) cofactor by joining the RQC complex to facilitate peptidyl transfer during CAT tailing step. Required for mitotic germ cell proliferation, gametogenesis after entry into meiosis, and localization of the P granule component pgl-1 on P granules. This chain is Eukaryotic translation initiation factor 5A-1 (iff-1), found in Caenorhabditis elegans.